A 1003-amino-acid polypeptide reads, in one-letter code: Glycine--tRNA ligase (1003 aa).

The tract at residues 1–310 (MSSQPLTLQD…VTAKQIPHIC (310 aa)) is glycine--tRNA ligase alpha subunit. Residues 311 to 1003 (QDEDFLLEIG…CFGFYAWDAL (693 aa)) are glycine--tRNA ligase beta subunit.

It belongs to the class-II aminoacyl-tRNA synthetase family.

The protein resides in the cytoplasm. The enzyme catalyses tRNA(Gly) + glycine + ATP = glycyl-tRNA(Gly) + AMP + diphosphate. The polypeptide is Glycine--tRNA ligase (glyQS) (Chlamydia muridarum (strain MoPn / Nigg)).